The chain runs to 689 residues: Glycine--tRNA ligase beta subunit (689 aa).

Belongs to the class-II aminoacyl-tRNA synthetase family. Tetramer of two alpha and two beta subunits.

It is found in the cytoplasm. The enzyme catalyses tRNA(Gly) + glycine + ATP = glycyl-tRNA(Gly) + AMP + diphosphate. This Shewanella piezotolerans (strain WP3 / JCM 13877) protein is Glycine--tRNA ligase beta subunit.